Reading from the N-terminus, the 507-residue chain is RNA polymerase I-specific transcription initiation factor RRN11 (507 aa).

The span at 37–47 (KSTTTDSLPTP) shows a compositional bias: polar residues. 2 disordered regions span residues 37 to 76 (KSTT…LQQK) and 89 to 124 (GEIY…SDEE). A compositionally biased stretch (acidic residues) spans 97-108 (SETDSQEEETEE). Residues 109 to 124 (GGEHDTGIDKEDSDEE) show a composition bias toward basic and acidic residues.

In terms of assembly, component of the core factor (CF) complex, which consists of RRN6, RRN7 and RRN11. The CF heterotrimer may further dimerize to form a hexamer. RRN11 interacts with RRN6, RRN7 and SPT15.

The protein resides in the nucleus. The protein localises to the nucleolus. Its function is as follows. Acts as a component of the core factor (CF) complex which is essential for the initiation of rDNA transcription by RNA polymerase I. After binding of UAF (upstream activation factor) to an upstream element of the promoter, CF is recruited in a SPT15/TBP-dependent manner to form a preinitiation complex. This Saccharomyces cerevisiae (strain ATCC 204508 / S288c) (Baker's yeast) protein is RNA polymerase I-specific transcription initiation factor RRN11 (RRN11).